Here is a 482-residue protein sequence, read N- to C-terminus: UDP-N-acetylmuramate--L-alanine ligase (482 aa).

129–135 (GTHGKTT) contacts ATP.

Belongs to the MurCDEF family.

Its subcellular location is the cytoplasm. It catalyses the reaction UDP-N-acetyl-alpha-D-muramate + L-alanine + ATP = UDP-N-acetyl-alpha-D-muramoyl-L-alanine + ADP + phosphate + H(+). Its pathway is cell wall biogenesis; peptidoglycan biosynthesis. Functionally, cell wall formation. In Acinetobacter baylyi (strain ATCC 33305 / BD413 / ADP1), this protein is UDP-N-acetylmuramate--L-alanine ligase.